A 60-amino-acid polypeptide reads, in one-letter code: Large ribosomal subunit protein uL30 (60 aa).

It belongs to the universal ribosomal protein uL30 family. In terms of assembly, part of the 50S ribosomal subunit.

This is Large ribosomal subunit protein uL30 from Streptomyces filamentosus (Streptomyces roseosporus).